Consider the following 391-residue polypeptide: Elongation factor Tu 2 (391 aa).

A tr-type G domain is found at 10-201 (KPHVNIGTIG…EVDNYIPTPE (192 aa)). The G1 stretch occupies residues 19-26 (GHVDHGKT). Residue 19-26 (GHVDHGKT) coordinates GTP. Threonine 26 lines the Mg(2+) pocket. Positions 55 to 59 (GITIS) are G2. Positions 76–79 (DCPG) are G3. Residues 76–80 (DCPGH) and 131–134 (NKVD) each bind GTP. Residues 131-134 (NKVD) are G4. The tract at residues 169–171 (SAL) is G5.

Belongs to the TRAFAC class translation factor GTPase superfamily. Classic translation factor GTPase family. EF-Tu/EF-1A subfamily. In terms of assembly, monomer.

It localises to the cytoplasm. It catalyses the reaction GTP + H2O = GDP + phosphate + H(+). Functionally, GTP hydrolase that promotes the GTP-dependent binding of aminoacyl-tRNA to the A-site of ribosomes during protein biosynthesis. This Bartonella quintana (strain Toulouse) (Rochalimaea quintana) protein is Elongation factor Tu 2.